Reading from the N-terminus, the 60-residue chain is Large ribosomal subunit protein uL30 (60 aa).

Belongs to the universal ribosomal protein uL30 family. Part of the 50S ribosomal subunit.

This Acidothermus cellulolyticus (strain ATCC 43068 / DSM 8971 / 11B) protein is Large ribosomal subunit protein uL30.